We begin with the raw amino-acid sequence, 643 residues long: Threonine--tRNA ligase (643 aa).

Residues 1–61 enclose the TGS domain; the sequence is MPIITLPDGS…EQDATLEIIT (61 aa). Positions 243–534 are catalytic; sequence DHRKIGKALD…ITEEYAGFFP (292 aa). Residues Cys-334, His-385, and His-511 each coordinate Zn(2+).

It belongs to the class-II aminoacyl-tRNA synthetase family. Homodimer. Requires Zn(2+) as cofactor.

Its subcellular location is the cytoplasm. It carries out the reaction tRNA(Thr) + L-threonine + ATP = L-threonyl-tRNA(Thr) + AMP + diphosphate + H(+). Functionally, catalyzes the attachment of threonine to tRNA(Thr) in a two-step reaction: L-threonine is first activated by ATP to form Thr-AMP and then transferred to the acceptor end of tRNA(Thr). Also edits incorrectly charged L-seryl-tRNA(Thr). This chain is Threonine--tRNA ligase, found in Haemophilus influenzae (strain 86-028NP).